Consider the following 453-residue polypeptide: MRETSVHIVSLGCPKNLIDSEVMAALLEQAGCRIVSGPEEADILLLNTCAFILPAREESIDEIFRLAEWKKAGKCRHLIVTGCLPQRYGAELAAELPEVDLFLGISEVPNIADHLRVLMEGKHSEKNRVIVTNPLFLMDAGHPRLLSTPPYSAYLKIAEGCSNRCSYCIIPRLRGKARSRPIEDILREAEDLVDRGVRELILVAQDTTAYGRDLEGKPTLALLLRELAGLNTLAWIRILYTYPTGLTDELLNVIANQDRICSYLDVPIQHIDDDILAAMKRRGDSHLIRNSLERARAVIPDLALRTSLITGFPGETPAKFHRLIAFVQETRFDHLGVFPYSPEEGTPAEKLPRQVSQRTKETRRNLLMEEQAVISHEINQTLVGSLQEVLIEGPSSSPDYPMIGRCRRQAPDIDGLTYVKGGKQPFLPGSLVQCRIVAADDYDLFAEVISSPD.

One can recognise an MTTase N-terminal domain in the interval 4-120; sequence TSVHIVSLGC…IADHLRVLME (117 aa). Residues Cys13, Cys49, Cys83, Cys161, Cys165, and Cys168 each contribute to the [4Fe-4S] cluster site. The Radical SAM core domain maps to 147 to 377; that stretch reads STPPYSAYLK…MEEQAVISHE (231 aa). In terms of domain architecture, TRAM spans 380 to 450; that stretch reads QTLVGSLQEV…DYDLFAEVIS (71 aa).

It belongs to the methylthiotransferase family. RimO subfamily. It depends on [4Fe-4S] cluster as a cofactor.

The protein localises to the cytoplasm. It carries out the reaction L-aspartate(89)-[ribosomal protein uS12]-hydrogen + (sulfur carrier)-SH + AH2 + 2 S-adenosyl-L-methionine = 3-methylsulfanyl-L-aspartate(89)-[ribosomal protein uS12]-hydrogen + (sulfur carrier)-H + 5'-deoxyadenosine + L-methionine + A + S-adenosyl-L-homocysteine + 2 H(+). Functionally, catalyzes the methylthiolation of an aspartic acid residue of ribosomal protein uS12. The protein is Ribosomal protein uS12 methylthiotransferase RimO of Syntrophus aciditrophicus (strain SB).